We begin with the raw amino-acid sequence, 819 residues long: Lon protease (819 aa).

Residues 1–36 (MDSTTNSDSPILDPNPEDVEKLLDESEEESEDQSTE) form a disordered region. Residues 43-240 (LFILPLNKRP…KALILLKKEL (198 aa)) enclose the Lon N-terminal domain. 393–400 (GPPGVGKT) contributes to the ATP binding site. One can recognise a Lon proteolytic domain in the interval 635–817 (STPVGVATGL…DDVLKVAFPK (183 aa)). Residues Ser-723 and Lys-766 contribute to the active site.

This sequence belongs to the peptidase S16 family. As to quaternary structure, homohexamer. Organized in a ring with a central cavity.

It is found in the cytoplasm. The enzyme catalyses Hydrolysis of proteins in presence of ATP.. Its function is as follows. ATP-dependent serine protease that mediates the selective degradation of mutant and abnormal proteins as well as certain short-lived regulatory proteins. Required for cellular homeostasis and for survival from DNA damage and developmental changes induced by stress. Degrades polypeptides processively to yield small peptide fragments that are 5 to 10 amino acids long. Binds to DNA in a double-stranded, site-specific manner. The sequence is that of Lon protease from Chlamydia pneumoniae (Chlamydophila pneumoniae).